Reading from the N-terminus, the 143-residue chain is Large ribosomal subunit protein uL16 (143 aa).

Belongs to the universal ribosomal protein uL16 family. Part of the 50S ribosomal subunit.

Its function is as follows. Binds 23S rRNA and is also seen to make contacts with the A and possibly P site tRNAs. The chain is Large ribosomal subunit protein uL16 from Fusobacterium nucleatum subsp. nucleatum (strain ATCC 25586 / DSM 15643 / BCRC 10681 / CIP 101130 / JCM 8532 / KCTC 2640 / LMG 13131 / VPI 4355).